A 408-amino-acid chain; its full sequence is Putative mannan endo-1,4-beta-mannosidase 4 (408 aa).

Residues 1–23 (MKCLCFIVLLAIVIAQSYVGVEA) form the signal peptide. N-linked (GlcNAc...) asparagine glycosylation occurs at Asn-73. Residues Trp-85 and Asn-201 each contribute to the substrate site. The active-site Proton donor is Glu-202. Glu-322 (nucleophile) is an active-site residue. Residue Trp-364 coordinates substrate.

Belongs to the glycosyl hydrolase 5 (cellulase A) family.

It is found in the secreted. The enzyme catalyses Random hydrolysis of (1-&gt;4)-beta-D-mannosidic linkages in mannans, galactomannans and glucomannans.. The chain is Putative mannan endo-1,4-beta-mannosidase 4 (MAN4) from Arabidopsis thaliana (Mouse-ear cress).